Consider the following 265-residue polypeptide: Hydroxyethylthiazole kinase (265 aa).

Met-50 provides a ligand contact to substrate. Positions 125 and 171 each coordinate ATP. Gly-198 serves as a coordination point for substrate.

This sequence belongs to the Thz kinase family. Requires Mg(2+) as cofactor.

The catalysed reaction is 5-(2-hydroxyethyl)-4-methylthiazole + ATP = 4-methyl-5-(2-phosphooxyethyl)-thiazole + ADP + H(+). It participates in cofactor biosynthesis; thiamine diphosphate biosynthesis; 4-methyl-5-(2-phosphoethyl)-thiazole from 5-(2-hydroxyethyl)-4-methylthiazole: step 1/1. Its function is as follows. Catalyzes the phosphorylation of the hydroxyl group of 4-methyl-5-beta-hydroxyethylthiazole (THZ). The sequence is that of Hydroxyethylthiazole kinase from Salmonella paratyphi B (strain ATCC BAA-1250 / SPB7).